The chain runs to 544 residues: Methionine--tRNA ligase (544 aa).

Residues 10-20 carry the 'HIGH' region motif; it reads PYANGSLHLGH. Residues C141, C144, C153, and C156 each coordinate Zn(2+). The 'KMSKS' region signature appears at 329–333; that stretch reads KLSTS. Residue T332 coordinates ATP.

This sequence belongs to the class-I aminoacyl-tRNA synthetase family. MetG type 1 subfamily. As to quaternary structure, monomer. The cofactor is Zn(2+).

The protein localises to the cytoplasm. The enzyme catalyses tRNA(Met) + L-methionine + ATP = L-methionyl-tRNA(Met) + AMP + diphosphate. In terms of biological role, is required not only for elongation of protein synthesis but also for the initiation of all mRNA translation through initiator tRNA(fMet) aminoacylation. In Bacillus cereus (strain AH187), this protein is Methionine--tRNA ligase.